The primary structure comprises 627 residues: Protein EXECUTER 2, chloroplastic (627 aa).

Disordered regions lie at residues 1-34 (MSAA…PSAA), 212-277 (PTKG…AKDS), and 308-359 (EAEL…SKSP). The N-terminal 45 residues, 1–45 (MSAATACASPAAARPPLHIPLRSPPSAAHLPSAAASRRASSAACR), are a transit peptide targeting the chloroplast. Over residues 217 to 229 (SSASSVSSATAES) the composition is skewed to low complexity. Acidic residues-rich tracts occupy residues 308–321 (EAEL…ELVQ) and 331–353 (SLED…SDSA).

Its subcellular location is the plastid. The protein localises to the chloroplast. Functionally, together with EX1, enables higher plants to perceive singlet oxygen as a stress signal in plastid that activates a genetically determined nuclear stress response program which triggers a programmed cell death (PCD). This transfer of singlet oxygen-induced stress-related signals from the plastid to the nucleus that triggers genetically controlled PCD pathway is unique to photosynthetic eukaryotes and operates under mild stress conditions, impeding photosystem II (PSII) without causing photooxidative damage of the plant. The polypeptide is Protein EXECUTER 2, chloroplastic (Oryza sativa subsp. japonica (Rice)).